We begin with the raw amino-acid sequence, 110 residues long: RNA polymerase II transcriptional coactivator (110 aa).

The tract at residues Met-1 to Thr-50 is disordered. A compositionally biased stretch (basic and acidic residues) spans Pro-17 to Gly-42.

It belongs to the transcriptional coactivator PC4 family.

The protein resides in the nucleus. Functionally, general coactivator that functions cooperatively with TAFs and mediates functional interactions between upstream activators and the general transcriptional machinery. Binds single-stranded DNA. Binds specifically to the NssBF element, a short nucleotide sequence of the 1731 retrotransposon, to repress promoter activity. The chain is RNA polymerase II transcriptional coactivator (Ssb-c31a) from Drosophila melanogaster (Fruit fly).